The following is a 307-amino-acid chain: Methionyl-tRNA formyltransferase (307 aa).

Residue 108–111 (SLLP) coordinates (6S)-5,6,7,8-tetrahydrofolate.

This sequence belongs to the Fmt family.

The catalysed reaction is L-methionyl-tRNA(fMet) + (6R)-10-formyltetrahydrofolate = N-formyl-L-methionyl-tRNA(fMet) + (6S)-5,6,7,8-tetrahydrofolate + H(+). Attaches a formyl group to the free amino group of methionyl-tRNA(fMet). The formyl group appears to play a dual role in the initiator identity of N-formylmethionyl-tRNA by promoting its recognition by IF2 and preventing the misappropriation of this tRNA by the elongation apparatus. The sequence is that of Methionyl-tRNA formyltransferase from Stenotrophomonas maltophilia (strain R551-3).